We begin with the raw amino-acid sequence, 447 residues long: Peptide-N(4)-(N-acetyl-beta-glucosaminyl)asparagine amidase (447 aa).

Residues Cys209, Cys212, Cys241, and Cys244 each contribute to the Zn(2+) site. The Nucleophile role is filled by Cys267. Catalysis depends on residues His294 and Asp311.

This sequence belongs to the transglutaminase-like superfamily. PNGase family. Requires Zn(2+) as cofactor.

It localises to the cytoplasm. It carries out the reaction Hydrolysis of an N(4)-(acetyl-beta-D-glucosaminyl)asparagine residue in which the glucosamine residue may be further glycosylated, to yield a (substituted) N-acetyl-beta-D-glucosaminylamine and a peptide containing an aspartate residue.. Specifically deglycosylates the denatured form of N-linked glycoproteins in the cytoplasm and assists their proteasome-mediated degradation. Cleaves the beta-aspartyl-glucosamine (GlcNAc) of the glycan and the amide side chain of Asn, converting Asn to Asp. Prefers proteins containing high-mannose over those bearing complex type oligosaccharides. Can recognize misfolded proteins in the endoplasmic reticulum that are exported to the cytosol to be destroyed and deglycosylate them, while it has no activity toward native proteins. Deglycosylation is a prerequisite for subsequent proteasome-mediated degradation of some, but not all, misfolded glycoproteins. The chain is Peptide-N(4)-(N-acetyl-beta-glucosaminyl)asparagine amidase (PNG1) from Oryza sativa subsp. japonica (Rice).